The sequence spans 367 residues: DNA replication and repair protein RecF (367 aa).

An ATP-binding site is contributed by 30–37 (GANGSGKT).

This sequence belongs to the RecF family.

The protein localises to the cytoplasm. Its function is as follows. The RecF protein is involved in DNA metabolism; it is required for DNA replication and normal SOS inducibility. RecF binds preferentially to single-stranded, linear DNA. It also seems to bind ATP. The protein is DNA replication and repair protein RecF of Pseudomonas putida (strain GB-1).